The following is a 293-amino-acid chain: Probable endoribonuclease YicC (293 aa).

Belongs to the YicC/YloC family. A divalent metal cation is required as a cofactor.

In terms of biological role, negatively modulates sporulation, probably in response to nutrient conditions. Effects expression of sporulation regulator spo0A in an indirect manner, possibly via repression of the sinRR' operon. Functionally, probably a ssRNA endonuclease. Its function is as follows. Might contribute to small RNA (sRNA) regulation. This chain is Probable endoribonuclease YicC, found in Clostridioides difficile (strain 630) (Peptoclostridium difficile).